A 2210-amino-acid chain; its full sequence is Orsellinic acid synthase ArmB (2210 aa).

The N-terminal acylcarrier protein transacylase domain (SAT) stretch occupies residues 38 to 261; the sequence is LLLDACHYAF…HKTTVDALYH (224 aa). Residues 391 to 817 enclose the Ketosynthase family 3 (KS3) domain; the sequence is QEPIAICGMS…GSNGALLLEE (427 aa). Catalysis depends on for beta-ketoacyl synthase activity residues Cys-561, His-696, and His-736. The malonyl-CoA:ACP transacylase (MAT) domain stretch occupies residues 915–1240; sequence VFVFSGQGGQ…GLTLSSSLSQ (326 aa). Ser-1009 serves as the catalytic For acyl/malonyl transferase activity. Positions 1307–1437 are N-terminal hotdog fold; the sequence is MLQSWAQFPS…GQFRPLLVVD (131 aa). Residues 1307 to 1614 enclose the PKS/mFAS DH domain; that stretch reads MLQSWAQFPS…FKKLRLNTLQ (308 aa). Positions 1336–1611 are product template (PT) domain; that stretch reads ITGHIVGDVP…GMCFKKLRLN (276 aa). His-1339 functions as the Proton acceptor; for dehydratase activity in the catalytic mechanism. Positions 1464-1614 are C-terminal hotdog fold; sequence AEVFTTRTAY…FKKLRLNTLQ (151 aa). Asp-1525 serves as the catalytic Proton donor; for dehydratase activity. One can recognise a Carrier 1 domain in the interval 1660–1735; sequence VDVQNTVLNI…ELVREISSTV (76 aa). The residue at position 1694 (Ser-1694) is an O-(pantetheine 4'-phosphoryl)serine. The disordered stretch occupies residues 1739-1761; the sequence is AATAVNTPETASTPEPTLQGDAS. Residues 1845-1922 form the Carrier 2 domain; the sequence is SSPSSDLVDT…AVNQYISSKR (78 aa). Ser-1882 is modified (O-(pantetheine 4'-phosphoryl)serine). A disordered region spans residues 1920–1946; sequence SKRPGKSPKQVEETAMDPDREEDLSDL. Over residues 1933-1944 the composition is skewed to acidic residues; it reads TAMDPDREEDLS. The thioesterase (TE) domain stretch occupies residues 1963–2202; sequence VPMSVQKSSS…LGAVTQALVD (240 aa).

It functions in the pathway secondary metabolite biosynthesis. Its function is as follows. Non-reducing polyketide synthase, part of the gene cluster that mediates the biosynthesis of melleolides, a range of antifungal and phytotoxic polyketide derivatives composed of an orsellinic acid (OA) moiety esterified to various sesquiterpene alcohols. The first step in melleolides biosynthesis is performed by the delta(6)-protoilludene synthase PRO1 which catalyzes the cyclization of farnesyl diphosphate to protoilludene. The orsellinic acid synthase armB produces OA by condensing acetyl-CoA with 3 malonyl-CoA units in a three-round chain elongation reaction folowed by a C2-C7 ring closure. ArmB further catalyzes the trans-esterification of OA to the various sesquiterpene alcohols resulting from the hydroxylation of protoilludene. The melleolides cluster also includes 5 cytochrome P450 monooxygenases, 4 NAD(+)-dependent oxidoreductases, one flavin-dependent oxidoreductase, and one O-methyltransferase. The cytochrome P450 monooxygenases may be involved in protoilludene hydroxylation to elaborate melleolides with multiple alcohol groups, such as melleolide D, which carries alcohol functionalities at C-4, C-5, C-10, and C-13. The role of the NAD(+)-dependent enzymes remains unknown. Numerous melleolides, including arnamial, show 5'-O-methylation of the aromatic moiety which may be catalyzed by the methyltransferase encoded in the cluster. The flavin-dependent oxidoreductase might represent the dehydrogenase yielding the aldehyde in position 1 of arnamial and other melleolides. Finally, several halogenase localized outside of the cluster (armH1 to armH5), are able to catalyze the transfer of a single chlorine atom to the melleolide backbone, resulting in a 6'-chloromelleolide product. The sequence is that of Orsellinic acid synthase ArmB from Armillaria ostoyae (Armillaria root rot fungus).